A 545-amino-acid polypeptide reads, in one-letter code: Zinc finger protein 697 (545 aa).

The segment at 1–143 (MKQEDNQGVC…EQPAPPVLPW (143 aa)) is disordered. K2 participates in a covalent cross-link: Glycyl lysine isopeptide (Lys-Gly) (interchain with G-Cter in SUMO2). The segment covering 23–36 (DFEDSEDREGDPEE) has biased composition (acidic residues). Over residues 45–55 (DTNKREGHPEP) the composition is skewed to basic and acidic residues. 2 stretches are compositionally biased toward acidic residues: residues 79-94 (LSEEEGVSVRGEEDDQ) and 118-135 (EDDDESAGENRLEEEEEQ). 11 C2H2-type zinc fingers span residues 189–211 (TICPDCGESFSPGAAFLQHQRIH), 261–283 (FRCGECGKGFSRNTYLTNHLRLH), 289–311 (NLCADCGKSFSWRADLLKHRRLH), 317–339 (YPCPECGEAFSLSSHLLSHRRAH), 353–375 (FACGECGKGFVRRSHLANHQRIH), 381–403 (HGCGECGKRFSWRSDLVKHQRVH), 409–431 (YMCSECGETFSVSSHLFTHKRTH), 437–459 (YVCRECGKGFGRNSHLVNHLRVH), 465–487 (FRCGQCEKRFSDFSTLTQHQRTH), 493–515 (YTCIECGKSFIQSSHLIRHRRIH), and 521–543 (HKCAGCGKGFRYKTHLAQHQKLH).

It belongs to the krueppel C2H2-type zinc-finger protein family.

It is found in the nucleus. RNA-interacting protein with a high number of miRNA targets. Acts as a damage-induced regulator of muscle remodeling by mediating the interferon gamma response in muscle cells. This Homo sapiens (Human) protein is Zinc finger protein 697.